The sequence spans 539 residues: Phosphoenolpyruvate carboxykinase (ATP) (539 aa).

3 residues coordinate substrate: arginine 64, tyrosine 206, and lysine 212. ATP-binding positions include lysine 212, histidine 231, and glycine 247–threonine 255. Mn(2+)-binding residues include lysine 212 and histidine 231. Aspartate 268 is a Mn(2+) binding site. ATP contacts are provided by residues glutamate 296, arginine 332, arginine 448–isoleucine 449, and threonine 454. Arginine 332 is a substrate binding site.

The protein belongs to the phosphoenolpyruvate carboxykinase (ATP) family. Monomer. It depends on Mn(2+) as a cofactor.

It localises to the cytoplasm. It carries out the reaction oxaloacetate + ATP = phosphoenolpyruvate + ADP + CO2. The protein operates within carbohydrate biosynthesis; gluconeogenesis. Involved in the gluconeogenesis. Catalyzes the conversion of oxaloacetate (OAA) to phosphoenolpyruvate (PEP) through direct phosphoryl transfer between the nucleoside triphosphate and OAA. In Pectobacterium carotovorum subsp. carotovorum (strain PC1), this protein is Phosphoenolpyruvate carboxykinase (ATP).